We begin with the raw amino-acid sequence, 177 residues long: MTLNLAAKKAVVEEVTAVASKAISAVVADYRGLTVNQMTQLRSEARKSGVYLRVVRNTLTRRAFKNTEFECLNDLLVGPVFIALSLEAPSDAARLLKDYAKTFEKLEIRALSVGGKVYNANQIDAVASLPTRDEAISKLMYVMKAPIEKFVRTLAEPHAKLARTLAAVKDKKAGNPA.

Belongs to the universal ribosomal protein uL10 family. In terms of assembly, part of the ribosomal stalk of the 50S ribosomal subunit. The N-terminus interacts with L11 and the large rRNA to form the base of the stalk. The C-terminus forms an elongated spine to which L12 dimers bind in a sequential fashion forming a multimeric L10(L12)X complex.

In terms of biological role, forms part of the ribosomal stalk, playing a central role in the interaction of the ribosome with GTP-bound translation factors. The polypeptide is Large ribosomal subunit protein uL10 (Legionella pneumophila (strain Paris)).